The sequence spans 148 residues: Large ribosomal subunit protein bL9 (148 aa).

The protein belongs to the bacterial ribosomal protein bL9 family.

Binds to the 23S rRNA. This is Large ribosomal subunit protein bL9 from Staphylococcus aureus (strain bovine RF122 / ET3-1).